The sequence spans 178 residues: Fatty-acid and retinol-binding protein 1 (178 aa).

The signal sequence occupies residues 1 to 16 (MYHQLILMALIGVIMA). N-linked (GlcNAc...) asparagine glycans are attached at residues N44 and N75. 2 coiled-coil regions span residues 67 to 89 (DAAL…ELRN) and 123 to 153 (KLDV…ELKA). A glycan (N-linked (GlcNAc...) asparagine) is linked at N157.

The protein belongs to the fatty-acid and retinol-binding protein (FARBP) family. Post-translationally, N-glycosylated.

The protein resides in the secreted. Binds retinol and different fatty acids. The protein is Fatty-acid and retinol-binding protein 1 of Acanthocheilonema viteae (Filarial nematode worm).